Here is a 106-residue protein sequence, read N- to C-terminus: MSATSEMLAEINEVNLSYLLLAQRLLREDKAMGMFRMGISEELADVLANLTLAQTVKLAASNQMLCRFRFDDHALLSSLADKGRSSAVSHAHSAILMAGQPVESLR.

The protein belongs to the FlhD family. In terms of assembly, homodimer; disulfide-linked. Forms a heterohexamer composed of two FlhC and four FlhD subunits. Each FlhC binds a FlhD dimer, forming a heterotrimer, and a hexamer assembles by dimerization of two heterotrimers.

The protein localises to the cytoplasm. In terms of biological role, functions in complex with FlhC as a master transcriptional regulator that regulates transcription of several flagellar and non-flagellar operons by binding to their promoter region. Activates expression of class 2 flagellar genes, including fliA, which is a flagellum-specific sigma factor that turns on the class 3 genes. Also regulates genes whose products function in a variety of physiological pathways. This chain is Flagellar transcriptional regulator FlhD, found in Burkholderia pseudomallei (strain 1710b).